Consider the following 117-residue polypeptide: Hainantoxin-XV (117 aa).

The signal sequence occupies residues 1-20 (MKLCAVIIASLLVCVAVASS). The disordered stretch occupies residues 20–55 (SSDNQKEFAQEKEMTREETQSLGEHEKDDEVTGSEE). Positions 21 to 56 (SDNQKEFAQEKEMTREETQSLGEHEKDDEVTGSEER) are excised as a propeptide. Over residues 23–55 (NQKEFAQEKEMTREETQSLGEHEKDDEVTGSEE) the composition is skewed to basic and acidic residues. 4 disulfide bridges follow: Cys58–Cys72, Cys65–Cys78, Cys69–Cys115, and Cys71–Cys91.

It belongs to the neurotoxin 03 (Tx2) family. 02 subfamily. HNTX-XV sub-subfamily. As to expression, expressed by the venom gland.

The protein localises to the secreted. Its function is as follows. Putative ion channel inhibitor. The sequence is that of Hainantoxin-XV from Cyriopagopus hainanus (Chinese bird spider).